A 406-amino-acid chain; its full sequence is L-methionine gamma-lyase (406 aa).

Pyridoxal 5'-phosphate is bound by residues 76-78 and 106-107; these read YQR and GM. Tyr-132 is a binding site for L-homocysteine. 219 to 221 provides a ligand contact to pyridoxal 5'-phosphate; it reads SAT. At Lys-222 the chain carries N6-(pyridoxal phosphate)lysine. Arg-380 contacts L-homocysteine. Arg-380 is a binding site for L-methionine.

Belongs to the trans-sulfuration enzymes family. L-methionine gamma-lyase subfamily. Homotetramer. Pyridoxal 5'-phosphate serves as cofactor.

The catalysed reaction is L-methionine + H2O = methanethiol + 2-oxobutanoate + NH4(+). It catalyses the reaction L-homocysteine + H2O = 2-oxobutanoate + hydrogen sulfide + NH4(+) + H(+). Is inhibited in vitro by carbonyl reagents, completely inactivated by DL-propargylglycine, and unaffected by metal-chelating agents. Catalyzes the alpha,gamma-elimination of L-methionine to produce methanethiol, 2-oxobutanoate and ammonia. May be responsible for the production of methanethiol associated with desirable Cheddar-type sulfur notes during cheese ripening. Is also able to catalyze the alpha,gamma-elimination of L-homocysteine and DL-selenomethionine, but has no activity toward L-cysteine, L-cystathionine, S-adenosyl-L-homocysteine and D-methionine. The sequence is that of L-methionine gamma-lyase from Brevibacterium aurantiacum.